Consider the following 200-residue polypeptide: Cytochrome c biogenesis ATP-binding export protein CcmA (200 aa).

The 199-residue stretch at 2 to 200 (LDVIELDFDY…NKADYEEYHL (199 aa)) folds into the ABC transporter domain. Residue 34–41 (GSNGAGKT) participates in ATP binding.

The protein belongs to the ABC transporter superfamily. CcmA exporter (TC 3.A.1.107) family. As to quaternary structure, the complex is composed of two ATP-binding proteins (CcmA) and two transmembrane proteins (CcmB).

The protein resides in the cell inner membrane. It carries out the reaction heme b(in) + ATP + H2O = heme b(out) + ADP + phosphate + H(+). In terms of biological role, part of the ABC transporter complex CcmAB involved in the biogenesis of c-type cytochromes; once thought to export heme, this seems not to be the case, but its exact role is uncertain. Responsible for energy coupling to the transport system. This chain is Cytochrome c biogenesis ATP-binding export protein CcmA, found in Legionella pneumophila (strain Paris).